A 154-amino-acid polypeptide reads, in one-letter code: uncharacterized protein (154 aa).

The protein localises to the mitochondrion. This is an uncharacterized protein from Arabidopsis thaliana (Mouse-ear cress).